A 1171-amino-acid polypeptide reads, in one-letter code: MVASSTSNVNNATAINADSTDGATRRLSFAKIHEPLDVPNLLALQTDSFDWLVGNERWQARVAKAVEEGDLSVATSSGLSDIFEEISPIEDFQGTMSLSFSDPEFADPKYTMAECKDRDATYSAPLYVKAEFMNNNTGEIKQQTVFMGDFPLMTEKGTFVVNGTERVVVSQLVRSPGAYFERTADKTSDKDIFTAKIIPSRGAWFELEIDKRDQVGVRLDRKRKQSVTVLLKALGWTEGQILEEFGQYDSMRATLEKDATETREDALLDIYRKLRPGEPPTVEAAQSLLDNLYFNSKRYDLAKVGRYKINRKLGIDRSLGDKEASVLHVEDIVAMIKFLVALHAGEKTLTGKRDGQDHELRVEIDDIDHFGNRRIRAVGELIENQVRTGLSRMERVVRERMTTQDVEAITPQTLINIRPVVAAIKEFFGTSQLSQFMDQNNPLSGLTHKRRLSALGPGGLSRDRAGMEVRDVHPSHYGRMCPIETPEGPNIGLIGSLASYGRINPFGFIETPYRLVSEGVVSDEVQYLTADDEAEVLIAQANAPLDENKKFAEETVLVRARGGGGEPVLVPAADVEFMDVSPRQMVSVATALIPFLEHDDANRALMGANMQRQAVPLVRSEAPFVGTGMERAAAVDAGDVVIAKKAGVVTEVSAELVIMLNDDGTETNYRINKFARSNQGNCYNHRVLVSEGQRLEVGGIIADGPATDQGELALGKNLLVAFMSWEGHNFEDAIILSQRIVAEDVLSSIHIEEHEIDARDTKLGAEEITRDIPNVSEEVLAGLDERGIIHIGAEVEAGDILVGKVTPKGETELTPEERLLRAIFGEKSREVRDTSLKVPHGESGTVIGVRVFDRDNDDELPPGVNQLVRVYVAAKRKITDGDKLAGRHGNKGVISKILPIEDMPFLADGTPVDIVLNPLGVPGRMNVGQVLETHLGWVAKTGWKIEGEPEWVKQLPNLPRESGSTTVATPVFDGAREEEITGLLDSTNVTRDGDRLINSSGKTRLFDGRSGEPFPDPISVGYMYILKLHHLVDDKIHARSTGPYSMITQQPLGGKAQFGGQRFGEMEVWALEAYGAAYTLQELLTIKSDDIHGRVKVYEAIVKGENIPEPGVPESFKVLIKEMQSLCLNVEVLSTDGTTIEMRDSDDAVFTAAEELGIDLSRAEPSSVEEV.

It belongs to the RNA polymerase beta chain family. As to quaternary structure, the RNAP catalytic core consists of 2 alpha, 1 beta, 1 beta' and 1 omega subunit. When a sigma factor is associated with the core the holoenzyme is formed, which can initiate transcription.

The enzyme catalyses RNA(n) + a ribonucleoside 5'-triphosphate = RNA(n+1) + diphosphate. In terms of biological role, DNA-dependent RNA polymerase catalyzes the transcription of DNA into RNA using the four ribonucleoside triphosphates as substrates. In Arthrobacter sp. (strain FB24), this protein is DNA-directed RNA polymerase subunit beta.